The chain runs to 399 residues: Glutamine synthetase 1, mitochondrial (399 aa).

Residues 1–27 (MALRVAGLFLKKELVAPATQQLRLLRT) constitute a mitochondrion transit peptide. A GS beta-grasp domain is found at 62-143 (VQATYLWIDG…VLCDTYSADG (82 aa)). The 250-residue stretch at 150-399 (KRAAFQAAID…AIVRTCLLNE (250 aa)) folds into the GS catalytic domain.

This sequence belongs to the glutamine synthetase family. As to quaternary structure, homooctamer.

It localises to the mitochondrion. The catalysed reaction is L-glutamate + NH4(+) + ATP = L-glutamine + ADP + phosphate + H(+). This Drosophila melanogaster (Fruit fly) protein is Glutamine synthetase 1, mitochondrial (Gs1).